Consider the following 250-residue polypeptide: uncharacterized protein (250 aa).

One can recognise an ABC transporter domain in the interval 7–244 (LKVEDLHVYR…YKKECGKCYK (238 aa)). 39-46 (GPNGAGKS) contacts ATP.

This sequence belongs to the ABC transporter superfamily.

This is an uncharacterized protein from Methanocaldococcus jannaschii (strain ATCC 43067 / DSM 2661 / JAL-1 / JCM 10045 / NBRC 100440) (Methanococcus jannaschii).